Reading from the N-terminus, the 158-residue chain is ATP synthase subunit b', chloroplastic (158 aa).

Residues 25–45 (ATLPLMALQFIILTTILNFIF) traverse the membrane as a helical segment.

It belongs to the ATPase B chain family. In terms of assembly, F-type ATPases have 2 components, F(1) - the catalytic core - and F(0) - the membrane proton channel. F(1) has five subunits: alpha(3), beta(3), gamma(1), delta(1), epsilon(1). F(0) has four main subunits: a(1), b(1), b'(1) and c(10-14). The alpha and beta chains form an alternating ring which encloses part of the gamma chain. F(1) is attached to F(0) by a central stalk formed by the gamma and epsilon chains, while a peripheral stalk is formed by the delta, b and b' chains.

Its subcellular location is the plastid. It localises to the chloroplast thylakoid membrane. In terms of biological role, f(1)F(0) ATP synthase produces ATP from ADP in the presence of a proton or sodium gradient. F-type ATPases consist of two structural domains, F(1) containing the extramembraneous catalytic core and F(0) containing the membrane proton channel, linked together by a central stalk and a peripheral stalk. During catalysis, ATP synthesis in the catalytic domain of F(1) is coupled via a rotary mechanism of the central stalk subunits to proton translocation. Its function is as follows. Component of the F(0) channel, it forms part of the peripheral stalk, linking F(1) to F(0). The b'-subunit is a diverged and duplicated form of b found in plants and photosynthetic bacteria. This Gracilaria tenuistipitata var. liui (Red alga) protein is ATP synthase subunit b', chloroplastic.